The sequence spans 290 residues: O-methyltransferase agiB (290 aa).

Residue Asp155 coordinates S-adenosyl-L-methionine. Catalysis depends on His194, which acts as the Proton acceptor.

The protein belongs to the class I-like SAM-binding methyltransferase superfamily. Cation-independent O-methyltransferase family.

Its pathway is secondary metabolite biosynthesis. In terms of biological role, O-methyltransferase; part of the gene cluster that mediates the biosynthesis of the aspergillicins A and F, 2 cryptic cyclic hexa-depsipeptides. The hexamodular NRPS agiA catalyzes the condensation of the six amino acid residues including N-Me-L-O-Me-tyrosine, L-proline 1, L-proline 2, D-isoleucine, O-acetyl-threonine, and L-isoleucine. The starting condensation domain (C1) of agiA probably loads acetyl-CoA which is condensed on the N-terminus of threonine by the first module to yield O-acetyl-threonine. The second module then loads L-isoleucine. The epimerase (E) domain on module 2 is probably involved in the formation of the D-isoleucine moiety. Modules 3 and 4 further load 2 successive L-prolines. Module 5 is then involved in the condensation of O-Me-L-tyrosine produced by the O-methyltransferase agiB and the N-methyl transferase (NMeT) domain on module 5 probably catalyzes the N-methylation to yield the N-Me-L-O-Me-tyrosine moiety. The A domain of module 5 loads preferentially O-Me-L-tyrosine, but it can also accept L-phenylalanine, which leads to the production of aspergillicin G. Module 6 then loads the last residue, L-isoleucine. The C-terminal thiolesterase (TE) domain probably cyclizes the peptide using the hydroxy group from threonine to form the cyclic depsipeptide. In Aspergillus flavus (strain ATCC 200026 / FGSC A1120 / IAM 13836 / NRRL 3357 / JCM 12722 / SRRC 167), this protein is O-methyltransferase agiB.